The primary structure comprises 307 residues: Putative S-adenosyl-L-methionine-dependent methyltransferase MMAR_4570 (307 aa).

S-adenosyl-L-methionine is bound by residues aspartate 128 and 157-158; that span reads DL.

This sequence belongs to the UPF0677 family.

In terms of biological role, exhibits S-adenosyl-L-methionine-dependent methyltransferase activity. This Mycobacterium marinum (strain ATCC BAA-535 / M) protein is Putative S-adenosyl-L-methionine-dependent methyltransferase MMAR_4570.